The sequence spans 513 residues: ATP synthase subunit alpha (513 aa).

ATP is bound at residue 170–177 (GDRQTGKT).

This sequence belongs to the ATPase alpha/beta chains family. In terms of assembly, F-type ATPases have 2 components, CF(1) - the catalytic core - and CF(0) - the membrane proton channel. CF(1) has five subunits: alpha(3), beta(3), gamma(1), delta(1), epsilon(1). CF(0) has three main subunits: a(1), b(2) and c(9-12). The alpha and beta chains form an alternating ring which encloses part of the gamma chain. CF(1) is attached to CF(0) by a central stalk formed by the gamma and epsilon chains, while a peripheral stalk is formed by the delta and b chains.

Its subcellular location is the cell inner membrane. The catalysed reaction is ATP + H2O + 4 H(+)(in) = ADP + phosphate + 5 H(+)(out). Its function is as follows. Produces ATP from ADP in the presence of a proton gradient across the membrane. The alpha chain is a regulatory subunit. The protein is ATP synthase subunit alpha of Teredinibacter turnerae (strain ATCC 39867 / T7901).